We begin with the raw amino-acid sequence, 134 residues long: Methylglyoxal synthase (134 aa).

One can recognise an MGS-like domain in the interval 1–134 (MNIALIAHDN…DWRERVKERG (134 aa)). Substrate contacts are provided by residues H8, K12, 34-37 (TGTT), and 54-55 (SG). The active-site Proton donor/acceptor is the D60. Residue H87 participates in substrate binding.

Belongs to the methylglyoxal synthase family.

The catalysed reaction is dihydroxyacetone phosphate = methylglyoxal + phosphate. Functionally, catalyzes the formation of methylglyoxal from dihydroxyacetone phosphate. In Alkaliphilus metalliredigens (strain QYMF), this protein is Methylglyoxal synthase.